The primary structure comprises 255 residues: Reaction center protein L chain (255 aa).

3 helical membrane passes run 12-35 (GFFG…GTAL), 64-92 (GLWQ…RKLG), and 95-120 (LHIP…LLLG). Residues H133 and H153 each coordinate (7R,8Z)-bacteriochlorophyll b. The helical transmembrane segment at 150 to 179 (NPAHMIGITFFFTNCMAFGMHGSIILSVLN) threads the bilayer. H170 provides a ligand contact to Fe cation. F196 contributes to the a ubiquinone binding site. Residues 205 to 231 (GTLGIHRLGVFLAISAAFWSAVCIILS) form a helical membrane-spanning segment. H210 lines the Fe cation pocket.

Belongs to the reaction center PufL/M/PsbA/D family. In terms of assembly, reaction center is composed of four bacteriochlorophylls, two bacteriopheophytins, two ubiquinones, one iron, and three highly hydrophobic polypeptide chains (designated L, M, and H).

It is found in the cellular chromatophore membrane. Functionally, the reaction center is a membrane-bound complex that mediates the initial photochemical event in the electron transfer process of photosynthesis. This is Reaction center protein L chain (pufL) from Pararhodospirillum photometricum (Rhodospirillum photometricum).